The sequence spans 61 residues: Large ribosomal subunit protein bL28 (61 aa).

The segment at 1 to 26 (MAKDFINGKRTQFGNKRSHALNSSRR) is disordered. Polar residues predominate over residues 9-25 (KRTQFGNKRSHALNSSR).

Belongs to the bacterial ribosomal protein bL28 family.

This is Large ribosomal subunit protein bL28 from Limosilactobacillus reuteri (strain DSM 20016) (Lactobacillus reuteri).